The chain runs to 330 residues: MIAFRGVSKVYTAGGREVAALRNVSLRVEAGEIHGVLGQSGAGKSTLIRCANLLERPTEGSVSVDGQDLLALSPEALRKARQGIGMIFQHFNLFGSKTVAANVAYPLEVAGTPREAIRERVEELLSLVGLSDKAQAYPSQLSGGQKQRVGIARALAPRPRVLLSDEATSALDPETTRSVLGLLRDINQKLGVTLLLITHQMDVVKAICDSVSVLERGRLVEQGKVTELLAHPSTRLHQLCFPAFAAPTDAPSGRRVALTLAGEHARRPLLGTLARQFDVDALLVEGAMERVGNTRVGRLLVDLQGSADAVSQALAYLREQGLTLEEAANG.

Residues Ile2–Phe241 form the ABC transporter domain. ATP is bound at residue Gly38–Ser45.

It belongs to the ABC transporter superfamily. Methionine importer (TC 3.A.1.24) family. In terms of assembly, the complex is composed of two ATP-binding proteins (MetN), two transmembrane proteins (MetI) and a solute-binding protein (MetQ).

It is found in the cell inner membrane. It catalyses the reaction L-methionine(out) + ATP + H2O = L-methionine(in) + ADP + phosphate + H(+). The enzyme catalyses D-methionine(out) + ATP + H2O = D-methionine(in) + ADP + phosphate + H(+). In terms of biological role, part of the ABC transporter complex MetNIQ involved in methionine import. Responsible for energy coupling to the transport system. In Myxococcus xanthus (strain DK1622), this protein is Methionine import ATP-binding protein MetN.